Here is a 132-residue protein sequence, read N- to C-terminus: Small ribosomal subunit protein uS8 (132 aa).

This sequence belongs to the universal ribosomal protein uS8 family. In terms of assembly, part of the 30S ribosomal subunit. Contacts proteins S5 and S12.

One of the primary rRNA binding proteins, it binds directly to 16S rRNA central domain where it helps coordinate assembly of the platform of the 30S subunit. This Francisella tularensis subsp. tularensis (strain FSC 198) protein is Small ribosomal subunit protein uS8.